We begin with the raw amino-acid sequence, 540 residues long: Chaperonin GroEL (540 aa).

ATP-binding positions include 29-32, 86-90, Gly413, 476-478, and Asp492; these read TLGP, DGTTT, and NAA.

The protein belongs to the chaperonin (HSP60) family. Forms a cylinder of 14 subunits composed of two heptameric rings stacked back-to-back. Interacts with the co-chaperonin GroES.

It is found in the cytoplasm. The catalysed reaction is ATP + H2O + a folded polypeptide = ADP + phosphate + an unfolded polypeptide.. Functionally, together with its co-chaperonin GroES, plays an essential role in assisting protein folding. The GroEL-GroES system forms a nano-cage that allows encapsulation of the non-native substrate proteins and provides a physical environment optimized to promote and accelerate protein folding. This Tsukamurella paurometabola (Corynebacterium paurometabolum) protein is Chaperonin GroEL.